A 155-amino-acid chain; its full sequence is SsrA-binding protein (155 aa).

The span at 135-147 (TIKRRDQERDIKK) shows a compositional bias: basic and acidic residues. The interval 135 to 155 (TIKRRDQERDIKKQMKHYNAR) is disordered.

It belongs to the SmpB family.

It is found in the cytoplasm. Its function is as follows. Required for rescue of stalled ribosomes mediated by trans-translation. Binds to transfer-messenger RNA (tmRNA), required for stable association of tmRNA with ribosomes. tmRNA and SmpB together mimic tRNA shape, replacing the anticodon stem-loop with SmpB. tmRNA is encoded by the ssrA gene; the 2 termini fold to resemble tRNA(Ala) and it encodes a 'tag peptide', a short internal open reading frame. During trans-translation Ala-aminoacylated tmRNA acts like a tRNA, entering the A-site of stalled ribosomes, displacing the stalled mRNA. The ribosome then switches to translate the ORF on the tmRNA; the nascent peptide is terminated with the 'tag peptide' encoded by the tmRNA and targeted for degradation. The ribosome is freed to recommence translation, which seems to be the essential function of trans-translation. The sequence is that of SsrA-binding protein from Streptococcus pyogenes serotype M3 (strain SSI-1).